Reading from the N-terminus, the 1041-residue chain is Nuclear migration protein unc-83 (1041 aa).

Disordered stretches follow at residues 258 to 283 (VGHL…TETV), 453 to 498 (IHGQ…LEDD), and 613 to 646 (IRNR…DSIS). Residues 456–465 (QKKPLRRASR) are compositionally biased toward basic residues. The span at 613 to 626 (IRNRDSDTAPEHSD) shows a compositional bias: basic and acidic residues. Coiled coils occupy residues 785-816 (RSKE…DLLA) and 931-951 (KAEL…FNDM). The region spanning 986–1041 (TENEPLTIAEAISSSRLIKFTFALSLLAALAAIFYYHVFGKPFGPHVTYVNGPPPV) is the KASH domain. The helical; Anchor for type IV membrane protein transmembrane segment at 1005-1024 (FTFALSLLAALAAIFYYHVF) threads the bilayer.

As to quaternary structure, component of the unc-83-unc-84 LINC complex which contains at least unc-83 and unc-84. Within the unc-83-unc-84 LINC complex interacts with unc-84 (via C-terminus); the interaction is probably required to recruit unc-83 to the nuclear envelope where it then recruits dynein and kinesin-1 complexes to regulate nuclear migration. Interacts with bicd-1 and dlc-1. Interacts with nud-2 (via C-terminus); the interaction is direct, and is required for recruitment of nud-2 to the nuclear envelope. Interacts with klc-2; the interaction is direct. Predominantly expressed in migratory nuclei. Expressed in a variety of cell-types, including cells around the pharynx and in the uterus.

It localises to the nucleus membrane. The protein resides in the nucleus outer membrane. Its function is as follows. Cargo-specific adapter that is involved in nuclear migration during development and thereafter. Component of the unc-83-unc-84 LINC (LInker of Nucleoskeleton and Cytoskeleton) complex where it interacts with unc-84 to form a bridge connecting the nuclear envelope to the cytoskeleton which allows for nuclear transport along microtubules. Within the complex, connects the nuclear envelope to the microtubule cytoskeleton through the kinesin-1 light chain protein klc-2 (most likely within the Kinesin 1 motor complex) to regulate nuclear migrations. Moreover, within the complex, also recruits the large microtubule-associated bicd-1-dlc-1-egal-1 and lis-1-nud-2 complexes to the nuclear envelope to regulate both the bidirectional migration of nuclei and the extent of nuclear migrations. Not required for centrosome attachment to the nucleus. This Caenorhabditis elegans protein is Nuclear migration protein unc-83.